Consider the following 332-residue polypeptide: Divalent cation transporter CmaX (332 aa).

Topologically, residues 1–277 (MQAYESGDER…MNRTMYLLGI (277 aa)) are cytoplasmic. A helical membrane pass occupies residues 278–286 (ITGFFLPMS). Topologically, residues 287–307 (FVTGLLGINVGGIPGADAPHG) are periplasmic. Residues 308–323 (FWLACLLIGGVATFQW) form a helical membrane-spanning segment. Topologically, residues 324–332 (WVFRRLRWL) are cytoplasmic.

This sequence belongs to the CorA metal ion transporter (MIT) (TC 1.A.35) family. In terms of assembly, homopentamer.

It localises to the cell inner membrane. The enzyme catalyses Zn(2+)(in) = Zn(2+)(out). The catalysed reaction is Cd(2+)(in) = Cd(2+)(out). It carries out the reaction Ni(2+)(in) = Ni(2+)(out). It catalyses the reaction Co(2+)(in) = Co(2+)(out). Functionally, transports divalent cations including Zn(2+), Cd(2+), Ni(2+) and Co(2+). The proton gradient has a small influence on transport suggesting that the transport is probably not proton-dependent. This is Divalent cation transporter CmaX from Pseudomonas aeruginosa (strain ATCC 15692 / DSM 22644 / CIP 104116 / JCM 14847 / LMG 12228 / 1C / PRS 101 / PAO1).